We begin with the raw amino-acid sequence, 307 residues long: Pseudouridine-5'-phosphate glycosidase (307 aa).

The Proton donor role is filled by E28. Residues K89 and V109 each contribute to the substrate site. Mn(2+) is bound at residue D141. 143 to 145 serves as a coordination point for substrate; that stretch reads SAD. The active-site Nucleophile is K162.

It belongs to the pseudouridine-5'-phosphate glycosidase family. Homotrimer. Mn(2+) is required as a cofactor.

The catalysed reaction is D-ribose 5-phosphate + uracil = psi-UMP + H2O. Catalyzes the reversible cleavage of pseudouridine 5'-phosphate (PsiMP) to ribose 5-phosphate and uracil. Functions biologically in the cleavage direction, as part of a pseudouridine degradation pathway. The chain is Pseudouridine-5'-phosphate glycosidase from Alkaliphilus metalliredigens (strain QYMF).